Here is a 722-residue protein sequence, read N- to C-terminus: Inactive serine protease PAMR1 (722 aa).

The N-terminal stretch at 1–21 (MALLVWSSLVVASLHLLGTAA) is a signal peptide. The N-linked (GlcNAc...) asparagine glycan is linked to asparagine 98. 8 cysteine pairs are disulfide-bonded: cysteine 130-cysteine 152, cysteine 179-cysteine 201, cysteine 241-cysteine 252, cysteine 246-cysteine 262, cysteine 264-cysteine 273, cysteine 282-cysteine 331, cysteine 317-cysteine 344, and cysteine 416-cysteine 444. The CUB domain occupies 130–238 (CGEVIQAARG…DGFYVTFEEV (109 aa)). In terms of domain architecture, EGF-like spans 237 to 274 (EVTGCSSTPCFHDGTCIADKTGSYRCACLAGYTGRHCE). 2 Sushi domains span residues 280 to 346 (KSCK…VCIK) and 393 to 446 (KPAL…SCIP). N-linked (GlcNAc...) asparagine glycosylation is present at asparagine 318. One can recognise a Peptidase S1 domain in the interval 447–722 (ICGKLENFNI…FKEWLEKNMK (276 aa)). N-linked (GlcNAc...) asparagine glycosylation occurs at asparagine 455. Cysteines 491 and 507 form a disulfide. Asparagine 616 carries N-linked (GlcNAc...) asparagine glycosylation. 2 cysteine pairs are disulfide-bonded: cysteine 632-cysteine 651 and cysteine 663-cysteine 699.

It belongs to the peptidase S1 family.

It localises to the secreted. Its function is as follows. May play a role in regeneration of skeletal muscle. This chain is Inactive serine protease PAMR1 (pamr1), found in Xenopus tropicalis (Western clawed frog).